The following is a 453-amino-acid chain: G-protein coupled receptor 39 (453 aa).

The Extracellular segment spans residues 1 to 34 (MASPSLPGSDCSQIIDHSHVPEFEVATWIKITLI). Cystine bridges form between cysteine 11–cysteine 191 and cysteine 108–cysteine 210. Zn(2+) is bound by residues histidine 17 and histidine 19. A helical membrane pass occupies residues 35–55 (LVYLIIFVMGLLGNSATIRVT). At 56–69 (QVLQKKGYLQKEVT) the chain is on the cytoplasmic side. Residues 70–89 (DHMVSLACSDILVFLIGMPM) form a helical membrane-spanning segment. At 90-109 (EFYSIIWNPLTTSSYTLSCK) the chain is on the extracellular side. A helical transmembrane segment spans residues 110–131 (LHTFLFEACSYATLLHVLTLSF). Topologically, residues 132 to 151 (ERYIAICHPFRYKAVSGPCQ) are cytoplasmic. Residues 152-172 (VKLLIGFVWVTSALVALPLLF) traverse the membrane as a helical segment. The Extracellular portion of the chain corresponds to 173 to 217 (AMGTEYPLVNVPSHRGLTCNRSSTRHHEQPETSNMSICTNLSSRW). N-linked (GlcNAc...) asparagine glycans are attached at residues asparagine 192, asparagine 206, and asparagine 212. Residues 218-242 (TVFQSSIFGAFVVYLVVLLSVAFMC) form a helical membrane-spanning segment. Residues 243–283 (WNMMQVLMKSQKGSLAGGTRPPQLRKSESEESRTARRQTII) are Cytoplasmic-facing. The segment at 255–274 (GSLAGGTRPPQLRKSESEES) is disordered. Residues 284–305 (FLRLIVVTLAVCWMPNQIRRIM) form a helical membrane-spanning segment. Topologically, residues 306-323 (AAAKPKHDWTRSYFRAYM) are extracellular. A helical transmembrane segment spans residues 324 to 344 (ILLPFSETFFYLSSVINPLLY). Residues 345–453 (TVSSQQFRRV…AENGFQEHEV (109 aa)) lie on the Cytoplasmic side of the membrane. At serine 396 the chain carries Phosphoserine. The tract at residues 415 to 453 (SEAEPQSKSQSLSLESLEPNSGAKPANSAAENGFQEHEV) is disordered. Low complexity predominate over residues 418–435 (EPQSKSQSLSLESLEPNS).

This sequence belongs to the G-protein coupled receptor 1 family. Interacts with HTR1A. Interacts with GALR1. In terms of tissue distribution, expressed in many tissues, including the stomach, intestine and hypothalamus.

The protein localises to the cell membrane. Functionally, zinc-sensing receptor that can sense changes in extracellular Zn(2+), mediate Zn(2+) signal transmission, and participates in the regulation of numerous physiological processes including glucose homeostasis regulation, gastrointestinal mobility, hormone secretion and cell death. Activation by Zn(2+) in keratinocytes increases the intracellular concentration of Ca(2+) and activates the ERK/MAPK and PI3K/AKT signaling pathways leading to epithelial repair. Plays an essential role in normal wound healing by inducing the production of cytokines including the major inflammatory cytokine IL6 via the PKC/MAPK/CEBPB pathway. Regulates adipose tissue metabolism, especially lipolysis, and regulates the function of lipases, such as hormone-sensitive lipase and adipose triglyceride lipase. Plays a role in the inhibition of cell death and protects against oxidative, endoplasmic reticulum and mitochondrial stress by inducing secretion of the cytoprotective pigment epithelium-derived growth factor (PEDF) and probably other protective transcripts in a GNA13/RHOA/SRE-dependent manner. Forms dynamic heteroreceptor complexes with HTR1A and GALR1 depending on cell type or specific physiological states, resulting in signaling diversity: HTR1A-GPR39 shows additive increase in signaling along the serum response element (SRE) and NF-kappa-B pathways while GALR1 acts as an antagonist blocking SRE. The sequence is that of G-protein coupled receptor 39 (GPR39) from Homo sapiens (Human).